The following is a 331-amino-acid chain: Ketol-acid reductoisomerase (NADP(+)) (331 aa).

In terms of domain architecture, KARI N-terminal Rossmann spans 2–182 (ARLYYDADAN…GGTRAGILET (181 aa)). Residues 25–28 (YGSQ), S51, S53, and 83–86 (DEVQ) each bind NADP(+). H108 is an active-site residue. G134 contributes to the NADP(+) binding site. Positions 183–328 (TFREETETDL…KDLRAMFSWL (146 aa)) constitute a KARI C-terminal knotted domain. Residues D191, E195, E227, and E231 each contribute to the Mg(2+) site. S252 is a binding site for substrate.

The protein belongs to the ketol-acid reductoisomerase family. Mg(2+) serves as cofactor.

It catalyses the reaction (2R)-2,3-dihydroxy-3-methylbutanoate + NADP(+) = (2S)-2-acetolactate + NADPH + H(+). The enzyme catalyses (2R,3R)-2,3-dihydroxy-3-methylpentanoate + NADP(+) = (S)-2-ethyl-2-hydroxy-3-oxobutanoate + NADPH + H(+). The protein operates within amino-acid biosynthesis; L-isoleucine biosynthesis; L-isoleucine from 2-oxobutanoate: step 2/4. It functions in the pathway amino-acid biosynthesis; L-valine biosynthesis; L-valine from pyruvate: step 2/4. Functionally, involved in the biosynthesis of branched-chain amino acids (BCAA). Catalyzes an alkyl-migration followed by a ketol-acid reduction of (S)-2-acetolactate (S2AL) to yield (R)-2,3-dihydroxy-isovalerate. In the isomerase reaction, S2AL is rearranged via a Mg-dependent methyl migration to produce 3-hydroxy-3-methyl-2-ketobutyrate (HMKB). In the reductase reaction, this 2-ketoacid undergoes a metal-dependent reduction by NADPH to yield (R)-2,3-dihydroxy-isovalerate. The protein is Ketol-acid reductoisomerase (NADP(+)) of Cyanothece sp. (strain PCC 7425 / ATCC 29141).